The chain runs to 162 residues: Transcription elongation factor GreA (162 aa).

Residues 45–75 (ENAEYEAAREKQAFIEGRIKELEDMAARAEI) adopt a coiled-coil conformation.

Belongs to the GreA/GreB family.

In terms of biological role, necessary for efficient RNA polymerase transcription elongation past template-encoded arresting sites. The arresting sites in DNA have the property of trapping a certain fraction of elongating RNA polymerases that pass through, resulting in locked ternary complexes. Cleavage of the nascent transcript by cleavage factors such as GreA or GreB allows the resumption of elongation from the new 3'terminus. GreA releases sequences of 2 to 3 nucleotides. This is Transcription elongation factor GreA from Rickettsia canadensis (strain McKiel).